We begin with the raw amino-acid sequence, 325 residues long: Probable arylamine N-acetyltransferase 1 (325 aa).

The Acyl-thioester intermediate role is filled by C72. Active-site residues include H112 and D127.

This sequence belongs to the arylamine N-acetyltransferase family.

The enzyme catalyses an arylamine + acetyl-CoA = an N-acetylarylamine + CoA. The polypeptide is Probable arylamine N-acetyltransferase 1 (Dictyostelium discoideum (Social amoeba)).